Consider the following 961-residue polypeptide: Mitogen-activated protein kinase kinase kinase 13-A (961 aa).

The segment at 88–118 (LRDQDEPENTAPQGSSHSGDGGSYSGNEDIR) is disordered. One can recognise a Protein kinase domain in the interval 169–410 (ISELQWLGSG…FRQILMHLDI (242 aa)). ATP-binding positions include 175 to 183 (LGSGAQGAV) and Lys196. Asp280 acts as the Proton acceptor in catalysis. 2 leucine-zipper regions span residues 434 to 455 (VKKH…DEEL) and 487 to 508 (LSAI…EQAV). A coiled-coil region spans residues 458 to 497 (RRREELRHALDIREHYERKLERANNLYMELSAIMLQLEVR). Disordered regions lie at residues 513 to 600 (PGTY…SKGS), 615 to 637 (ALSQ…CSPY), and 799 to 883 (RRIR…KLDD). Low complexity predominate over residues 560-578 (SAEGSAASASPISGSPKTS). Positions 584-596 (NRYRSKPRHRRVN) are enriched in basic residues. Positions 810-823 (ESSEEEEGEVDSEV) are enriched in acidic residues. An acidic region spans residues 811–824 (SSEEEEGEVDSEVE). Positions 837–851 (KCQSYSTFSSENFSV) are enriched in polar residues.

It belongs to the protein kinase superfamily. Ser/Thr protein kinase family.

It is found in the cytoplasm. It localises to the membrane. It catalyses the reaction L-seryl-[protein] + ATP = O-phospho-L-seryl-[protein] + ADP + H(+). It carries out the reaction L-threonyl-[protein] + ATP = O-phospho-L-threonyl-[protein] + ADP + H(+). May have a role in the JNK signaling pathway. This chain is Mitogen-activated protein kinase kinase kinase 13-A (map3k13-a), found in Xenopus laevis (African clawed frog).